We begin with the raw amino-acid sequence, 420 residues long: Serine hydroxymethyltransferase (420 aa).

(6S)-5,6,7,8-tetrahydrofolate is bound by residues Leu121 and 125 to 127; that span reads GHL. Lys229 is modified (N6-(pyridoxal phosphate)lysine).

The protein belongs to the SHMT family. In terms of assembly, homodimer. Pyridoxal 5'-phosphate serves as cofactor.

It is found in the cytoplasm. The catalysed reaction is (6R)-5,10-methylene-5,6,7,8-tetrahydrofolate + glycine + H2O = (6S)-5,6,7,8-tetrahydrofolate + L-serine. It functions in the pathway one-carbon metabolism; tetrahydrofolate interconversion. It participates in amino-acid biosynthesis; glycine biosynthesis; glycine from L-serine: step 1/1. Functionally, catalyzes the reversible interconversion of serine and glycine with tetrahydrofolate (THF) serving as the one-carbon carrier. This reaction serves as the major source of one-carbon groups required for the biosynthesis of purines, thymidylate, methionine, and other important biomolecules. Also exhibits THF-independent aldolase activity toward beta-hydroxyamino acids, producing glycine and aldehydes, via a retro-aldol mechanism. This chain is Serine hydroxymethyltransferase, found in Wigglesworthia glossinidia brevipalpis.